Here is a 330-residue protein sequence, read N- to C-terminus: Olfactory receptor 5T9 (330 aa).

The Extracellular portion of the chain corresponds to 1-37 (MSIHSPGYTVRRIPVNNVTDTTMFILTGFTDDADLQV). Asparagine 17 is a glycosylation site (N-linked (GlcNAc...) asparagine). A helical transmembrane segment spans residues 38 to 58 (LLFLLFFVIYLFTLIGNLGLV). At 59 to 66 (LLVIGDSR) the chain is on the cytoplasmic side. A helical transmembrane segment spans residues 67-87 (LHNPMYYFLSVLSFLDACYST). Residues 88–111 (VVTPKMLVNFISNDKSISYPGCVT) are Extracellular-facing. Cysteine 109 and cysteine 201 are disulfide-bonded. Residues 112-132 (EMFLFVTFGTTECFLLAAMAY) traverse the membrane as a helical segment. The Cytoplasmic segment spans residues 133–145 (DRFVAIYNPLLYA). Residues 146 to 166 (VKMSPRVYIPLIIACYSGGIM) form a helical membrane-spanning segment. Over 167–208 (HATIHTVATFSLSFCASNEIRHVFCDIPPLLAISCSNTNINQ) the chain is Extracellular. The helical transmembrane segment at 209-229 (LLLFYCVGSIEIITILIVLVS) threads the bilayer. The Cytoplasmic segment spans residues 230–249 (YSFILFAILKMNSAEGRRKI). Residues 250 to 270 (FSTCGSHLTGVSIYHGTILFM) traverse the membrane as a helical segment. At 271–283 (YVRPSSNYALEHD) the chain is on the extracellular side. The helical transmembrane segment at 284–304 (MIVSTFYTIVIPMLNPIIYSL) threads the bilayer. Residues 305 to 330 (RNKDVKEAMKKIFERNFFMNKVHFKL) lie on the Cytoplasmic side of the membrane.

It belongs to the G-protein coupled receptor 1 family.

The protein localises to the cell membrane. Functionally, potential odorant receptor. The polypeptide is Olfactory receptor 5T9 (Mus musculus (Mouse)).